Consider the following 774-residue polypeptide: Cilium assembly protein DZIP1L (774 aa).

The C2H2-type zinc-finger motif lies at 166–189 (HTCHLCDKTFMNATFLRGHIQRRH). A coiled-coil region spans residues 204–450 (LGEVLEELRA…RKVLAALRKN (247 aa)). Disordered regions lie at residues 415–435 (MPKA…ASLE), 515–674 (NKEV…ASSG), and 686–774 (KQLE…IPGW). Over residues 421–433 (TEEDSSEEELEAS) the composition is skewed to acidic residues. 2 positions are modified to phosphoserine: Ser425 and Ser426. Positions 515 to 526 (NKEVSSRVKQRW) are enriched in basic and acidic residues. Low complexity predominate over residues 597–616 (GPSSTPVSPGSGLSSTPPFS).

It belongs to the DZIP C2H2-type zinc-finger protein family. In terms of assembly, interacts with SEPTIN2.

Its subcellular location is the cytoplasm. It localises to the cytoskeleton. The protein localises to the cilium basal body. The protein resides in the microtubule organizing center. It is found in the centrosome. Its subcellular location is the centriole. In terms of biological role, involved in primary cilium formation. Probably acts as a transition zone protein required for localization of PKD1/PC1 and PKD2/PC2 to the ciliary membrane. The protein is Cilium assembly protein DZIP1L of Mus musculus (Mouse).